The following is a 1185-amino-acid chain: Ubiquitin carboxyl-terminal hydrolase 36 (1185 aa).

The span at 126-169 (TGKALSSNGHDNTNGVNGSSAATVNGNRKQTVEQSNQNSTTNPN) shows a compositional bias: polar residues. The segment at 126 to 174 (TGKALSSNGHDNTNGVNGSSAATVNGNRKQTVEQSNQNSTTNPNELPKP) is disordered. Residues 199 to 509 (AGMLNVGNTC…NAYIMFYELD (311 aa)) enclose the USP domain. Cysteine 208 acts as the Nucleophile in catalysis. Residue histidine 468 is the Proton acceptor of the active site. A phosphoserine mark is found at serine 552 and serine 554. Residues 642 to 658 (ANSNKSSCNNNTLTTNS) are compositionally biased toward low complexity. Disordered regions lie at residues 642–804 (ANSN…TDAI), 818–975 (HRAT…YQSE), 1056–1122 (APTL…GSFP), and 1136–1185 (NKFK…QQQS). The span at 670 to 683 (SDEEDEDEDSDDDV) shows a compositional bias: acidic residues. Threonine 716 is modified (phosphothreonine). A phosphoserine mark is found at serine 726 and serine 728. Low complexity-rich tracts occupy residues 778–797 (KSNG…SNNN) and 836–853 (QQQQ…SLIS). Serine 867 carries the phosphoserine modification. Position 870 is a phosphothreonine (threonine 870). Serine 873 carries the post-translational modification Phosphoserine. The segment covering 891 to 920 (DDNDDDDEDADEEDDADADAEQEEYDDEVV) has biased composition (acidic residues). Polar residues-rich tracts occupy residues 924–942 (TTPS…SKPS) and 959–975 (SAKS…YQSE). The residue at position 925 (threonine 925) is a Phosphothreonine. The segment covering 1062–1071 (EAREQRKRDA) has biased composition (basic and acidic residues). Low complexity-rich tracts occupy residues 1151–1161 (QQQRALQRHLA) and 1172–1185 (QSTG…QQQS).

This sequence belongs to the peptidase C19 family. In terms of assembly, interacts with atms/PAF1, but not with CycT.

It localises to the nucleus. The protein localises to the nucleolus. The enzyme catalyses Thiol-dependent hydrolysis of ester, thioester, amide, peptide and isopeptide bonds formed by the C-terminal Gly of ubiquitin (a 76-residue protein attached to proteins as an intracellular targeting signal).. In terms of biological role, required for maintaining multiple types of adult stem cells, including male and female germline, epithelial follicle cell and intestinal stem cells. May function as a transcriptional repressor by continually deubiquiting histone H2B at the promoters of genes critical for cellular differentiation, thereby preventing histone H3 'Lys-4' trimethylation (H3K4). Controls selective autophagy activation by ubiquitinated proteins. In Drosophila mojavensis (Fruit fly), this protein is Ubiquitin carboxyl-terminal hydrolase 36 (Usp36).